The primary structure comprises 159 residues: 3-hydroxyacyl-[acyl-carrier-protein] dehydratase FabZ (159 aa).

Histidine 65 is a catalytic residue.

This sequence belongs to the thioester dehydratase family. FabZ subfamily.

It localises to the cytoplasm. It catalyses the reaction a (3R)-hydroxyacyl-[ACP] = a (2E)-enoyl-[ACP] + H2O. Functionally, involved in unsaturated fatty acids biosynthesis. Catalyzes the dehydration of short chain beta-hydroxyacyl-ACPs and long chain saturated and unsaturated beta-hydroxyacyl-ACPs. The chain is 3-hydroxyacyl-[acyl-carrier-protein] dehydratase FabZ from Microcystis aeruginosa (strain NIES-843 / IAM M-2473).